The chain runs to 336 residues: dTDP-glucose 4,6-dehydratase (336 aa).

Residues 7–13 (GGAGFIG), 37–40 (DKLT), and 63–64 (DI) each bind NAD(+). Threonine 87 provides a ligand contact to substrate. Threonine 102 provides a ligand contact to NAD(+). 127–129 (TDE) is a substrate binding site. Aspartate 128 (proton donor) is an active-site residue. Active-site proton acceptor residues include glutamate 129 and tyrosine 151. An NAD(+)-binding site is contributed by 151 to 155 (YAAAK). Asparagine 180 provides a ligand contact to substrate. Asparagine 181 is an NAD(+) binding site. Substrate contacts are provided by residues 190 to 191 (KL), 206 to 208 (PVY), arginine 215, asparagine 250, and 274 to 277 (RPGH).

It belongs to the NAD(P)-dependent epimerase/dehydratase family. dTDP-glucose dehydratase subfamily. Homodimer. The cofactor is NAD(+).

The catalysed reaction is dTDP-alpha-D-glucose = dTDP-4-dehydro-6-deoxy-alpha-D-glucose + H2O. The protein operates within antibiotic biosynthesis; novobiocin biosynthesis. Its function is as follows. dTDP-glucose 4,6-dehydratase involved in the generation of the deoxysugar in the novobiocin biosynthesis pathway, an aminocoumarin family antibiotic that targets bacterial DNA gyrases. This is dTDP-glucose 4,6-dehydratase (novT) from Streptomyces niveus (Streptomyces spheroides).